The primary structure comprises 376 residues: Thymidine kinase (376 aa).

A disordered region spans residues 1 to 44 (MASYPGHQHASAFDQAARSRGHSNRRTALRPRRQQEATEVRPEQ). Residues 19–32 (SRGHSNRRTALRPR) show a composition bias toward basic residues. Basic and acidic residues predominate over residues 33 to 44 (RQQEATEVRPEQ). 56–63 (GPHGMGKT) contacts ATP. The active-site Proton acceptor is the Glu-83. The substrate site is built by Tyr-101 and Gln-125. Arg-216 lines the ATP pocket. Position 222 (Arg-222) interacts with substrate. Positions 260–280 (GQLSGTAVPPQGAEPQSNAGP) are disordered.

The protein belongs to the herpesviridae thymidine kinase family. Homodimer.

The enzyme catalyses thymidine + ATP = dTMP + ADP + H(+). Its function is as follows. Catalyzes the transfer of the gamma-phospho group of ATP to thymidine to generate dTMP in the salvage pathway of pyrimidine synthesis. The dTMP serves as a substrate for DNA polymerase during viral DNA replication. Allows the virus to be reactivated and to grow in non-proliferative cells lacking a high concentration of phosphorylated nucleic acid precursors. The sequence is that of Thymidine kinase from Human herpesvirus 1 (strain HFEM) (HHV-1).